Here is a 3420-residue protein sequence, read N- to C-terminus: Adhesin BmaC autotransporter (3420 aa).

An N-terminal signal peptide occupies residues 1–72 (MPNLANQDFT…SLVMAGTAAA (72 aa)). Positions 3138-3420 (GPSGNNGIWA…AGSVGLRVRW (283 aa)) constitute an Autotransporter domain.

It localises to the cell surface. It is found in the cell outer membrane. Fibronectin-binding protein, which is involved in adhesion to host cells and in the infective process. Mediates the binding of B.suis to the extracellular matrix and to non-phagocytic cells via cell-associated fibronectin. The polypeptide is Adhesin BmaC autotransporter (Brucella suis biovar 1 (strain 1330)).